A 165-amino-acid polypeptide reads, in one-letter code: Large ribosomal subunit protein uL10 (165 aa).

This sequence belongs to the universal ribosomal protein uL10 family. Part of the ribosomal stalk of the 50S ribosomal subunit. The N-terminus interacts with L11 and the large rRNA to form the base of the stalk. The C-terminus forms an elongated spine to which L12 dimers bind in a sequential fashion forming a multimeric L10(L12)X complex.

In terms of biological role, forms part of the ribosomal stalk, playing a central role in the interaction of the ribosome with GTP-bound translation factors. This chain is Large ribosomal subunit protein uL10, found in Burkholderia mallei (strain NCTC 10229).